Consider the following 64-residue polypeptide: Alpha-toxin Ts5 (64 aa).

An LCN-type CS-alpha/beta domain is found at 2 to 64 (KDGYPVEGDN…KEPTKTSGRC (63 aa)). 4 disulfides stabilise this stretch: cysteine 12–cysteine 64, cysteine 16–cysteine 38, cysteine 24–cysteine 44, and cysteine 28–cysteine 46.

Belongs to the long (4 C-C) scorpion toxin superfamily. Sodium channel inhibitor family. Alpha subfamily. As to expression, expressed by the venom gland.

Its subcellular location is the secreted. Its function is as follows. Alpha toxins bind voltage-independently at site-3 of sodium channels (Nav) and inhibit the inactivation of the activated channels, thereby blocking neuronal transmission. By extending the depolarized period it indirectly affects beta-cell voltage-dependent potassium channels, thus increasing potassium permeability. The protein is Alpha-toxin Ts5 of Tityus serrulatus (Brazilian scorpion).